The primary structure comprises 115 residues: C-type natriuretic peptide prohormone (115 aa).

The disordered stretch occupies residues 24-49 (PSDELNNEAEEMSPAASLPELNADQS). A disulfide bridge links Cys-99 with Cys-115.

Belongs to the natriuretic peptide family. In terms of tissue distribution, CNP-115 is differentially processed to produce CNP-38 and CNP-39 in the heart and CNP-22 in the brain.

The protein resides in the secreted. Hormone which may be vasoactive and natriuretic. Has a cGMP-stimulating activity. This Scyliorhinus canicula (Small-spotted catshark) protein is C-type natriuretic peptide prohormone.